A 425-amino-acid polypeptide reads, in one-letter code: Formyl-CoA:oxalate CoA-transferase (425 aa).

CoA is bound by residues 17–18 (QS), R38, 72–75 (LDTK), 96–98 (NFG), R104, and 136–139 (KVYE). D168 serves as the catalytic Nucleophile. Residue 247 to 249 (GGQ) participates in substrate binding.

The protein belongs to the CoA-transferase III family. Frc subfamily. As to quaternary structure, homodimer.

The enzyme catalyses formyl-CoA + oxalate = oxalyl-CoA + formate. It participates in metabolic intermediate degradation; oxalate degradation; CO(2) and formate from oxalate: step 1/2. Functionally, involved in the catabolism of oxalate and in the adapatation to low pH via the induction of the oxalate-dependent acid tolerance response (ATR). Catalyzes the transfer of the CoA moiety from formyl-CoA to oxalate. The protein is Formyl-CoA:oxalate CoA-transferase of Bradyrhizobium diazoefficiens (strain JCM 10833 / BCRC 13528 / IAM 13628 / NBRC 14792 / USDA 110).